The sequence spans 236 residues: Ribose-5-phosphate isomerase A (236 aa).

Residues 33-36 (TGST), 90-93 (DGAD), and 103-106 (KGGG) each bind substrate. Glutamate 112 (proton acceptor) is an active-site residue. Lysine 130 contacts substrate.

The protein belongs to the ribose 5-phosphate isomerase family. In terms of assembly, homodimer.

It catalyses the reaction aldehydo-D-ribose 5-phosphate = D-ribulose 5-phosphate. Its pathway is carbohydrate degradation; pentose phosphate pathway; D-ribose 5-phosphate from D-ribulose 5-phosphate (non-oxidative stage): step 1/1. Its function is as follows. Catalyzes the reversible conversion of ribose-5-phosphate to ribulose 5-phosphate. This is Ribose-5-phosphate isomerase A from Nostoc sp. (strain PCC 7120 / SAG 25.82 / UTEX 2576).